A 123-amino-acid polypeptide reads, in one-letter code: Large ribosomal subunit protein bL12 (123 aa).

The interval 98-123 is disordered; it reads KEGVSKEEAEEIKSKLEDAGATVELK. Basic and acidic residues predominate over residues 100–115; it reads GVSKEEAEEIKSKLED.

The protein belongs to the bacterial ribosomal protein bL12 family. In terms of assembly, homodimer. Part of the ribosomal stalk of the 50S ribosomal subunit. Forms a multimeric L10(L12)X complex, where L10 forms an elongated spine to which 2 to 4 L12 dimers bind in a sequential fashion. Binds GTP-bound translation factors.

Forms part of the ribosomal stalk which helps the ribosome interact with GTP-bound translation factors. Is thus essential for accurate translation. The protein is Large ribosomal subunit protein bL12 of Halothermothrix orenii (strain H 168 / OCM 544 / DSM 9562).